Consider the following 1111-residue polypeptide: Putative leucine--tRNA ligase, cytoplasmic (1111 aa).

Positions 74–84 match the 'HIGH' region motif; the sequence is PYMNGALHLGH. A Phosphoserine modification is found at Ser-460. The 'KMSKS' region motif lies at 737–741; it reads KMSKS. Position 740 (Lys-740) interacts with ATP.

This sequence belongs to the class-I aminoacyl-tRNA synthetase family.

The protein localises to the cytoplasm. It carries out the reaction tRNA(Leu) + L-leucine + ATP = L-leucyl-tRNA(Leu) + AMP + diphosphate. This is Putative leucine--tRNA ligase, cytoplasmic (lrs1) from Schizosaccharomyces pombe (strain 972 / ATCC 24843) (Fission yeast).